The chain runs to 418 residues: Endoglucanase EG-II (418 aa).

Residues 1 to 21 (MNKSVAPLLLAASILYGGAAA) form the signal peptide. Q22 carries the pyrrolidone carboxylic acid modification. The region spanning 22 to 57 (QQTVWGQCGGIGWSGPTNCAPGSACSTLNPYYAQCI) is the CBM1 domain. Positions 58–91 (PGATTITTSTRPPSGPTTTTRATSTSSSTPPTSS) are linker. A disordered region spans residues 63–91 (ITTSTRPPSGPTTTTRATSTSSSTPPTSS). A catalytic region spans residues 92–418 (GVRFAGVNIA…SLVSSCLARK (327 aa)). Residues C107 and C113 are joined by a disulfide bond. N124 carries an N-linked (GlcNAc) asparagine glycan. C183 and C190 are oxidised to a cystine. E239 (proton donor/acceptor) is an active-site residue. 2 disulfides stabilise this stretch: C323–C359 and C364–C414. Residue E350 is the Nucleophile of the active site.

Belongs to the glycosyl hydrolase 5 (cellulase A) family.

It localises to the secreted. It catalyses the reaction Endohydrolysis of (1-&gt;4)-beta-D-glucosidic linkages in cellulose, lichenin and cereal beta-D-glucans.. Functionally, endoglucanase (EG) that cleaves the internal beta-1,4-glucosidic bonds in cellulose. The degradation of cellulose involves an interplay between different cellulolytic enzymes. Hydrolysis starts with EGs, which cut internal glycosidic linkages to reduce the polymerization degree of the substrate and creates new chain ends for exocellobiohydrolases (CBHs). The CBH release the disaccharide cellobiose from the non-reducing end of the cellulose polymer chain. Finally, beta-1,4-glucosidases hydrolyze the cellobiose and other short cello-oligosaccharides into glucose units. This chain is Endoglucanase EG-II (egl2), found in Hypocrea jecorina (strain ATCC 56765 / BCRC 32924 / NRRL 11460 / Rut C-30) (Trichoderma reesei).